The chain runs to 393 residues: Putative acid--amine ligase HI_0929 (393 aa).

103–105 lines the ATP pocket; sequence RFD. Residues Asp105, Glu117, and Asn119 each coordinate Mg(2+). ATP is bound by residues Lys267, Lys303, Gly310, Gln343, and 378–380; that span reads AVT.

This sequence belongs to the glutathionylspermidine synthase preATP-grasp family.

Functionally, may be a ligase forming an amide bond. Shows ATPase activity. In Haemophilus influenzae (strain ATCC 51907 / DSM 11121 / KW20 / Rd), this protein is Putative acid--amine ligase HI_0929.